The primary structure comprises 67 residues: Probable Sec-independent protein translocase protein TatE (67 aa).

The helical transmembrane segment at 1 to 21 threads the bilayer; it reads MEGISIAKLLIIGALIVLLFG. Residues 44-67 are disordered; it reads KDEDTSAARTTAEETPAERVSHKD.

Belongs to the TatA/E family. TatE subfamily.

The protein resides in the cell inner membrane. Part of the twin-arginine translocation (Tat) system that transports large folded proteins containing a characteristic twin-arginine motif in their signal peptide across membranes. TatE shares overlapping functions with TatA. The chain is Probable Sec-independent protein translocase protein TatE from Pantoea ananatis (strain LMG 20103).